A 370-amino-acid chain; its full sequence is Proline-rich protein 5-like (370 aa).

Ser28 bears the Phosphoserine mark. Disordered stretches follow at residues 312–346 and 351–370; these read LGEE…LDSP and LEDV…ASLS.

Belongs to the PROTOR family. Interacts with the mammalian target of rapamycin complex 2 (mTORC2) which contains MTOR, MLST8, PRR5, RICTOR, MAPKAP1 and DEPTOR. Interacts with RFFL. Interacts (via C-terminus) with ZFP36 (via C-terminus); this interaction may accelerate ZFP36-mediated mRNA decay during stress. Interacts with RICTOR. Ubiquitinated. Ubiquitination by RFFL promotes proteasomal degradation of PRR5L thereby modifying the substrate-specific activity of the mTORC2 complex. Ubiquitination by RFFL is stimulated by LPA/lysophosphatidic acid.

Associates with the mTORC2 complex that regulates cellular processes including survival and organization of the cytoskeleton. Regulates the activity of the mTORC2 complex in a substrate-specific manner preventing for instance the specific phosphorylation of PKCs and thereby controlling cell migration. Plays a role in the stimulation of ZFP36-mediated mRNA decay of several ZFP36-associated mRNAs, such as TNF-alpha and GM-CSF, in response to stress. Required for ZFP36 localization to cytoplasmic stress granule (SG) and P-body (PB) in response to stress. The protein is Proline-rich protein 5-like (Prr5l) of Mus musculus (Mouse).